The following is a 680-amino-acid chain: DNA-directed RNA polymerase subunit beta' (680 aa).

Residues Cys-69, Cys-71, Cys-87, and Cys-90 each coordinate Zn(2+). Residues Asp-489, Asp-491, and Asp-493 each contribute to the Mg(2+) site.

This sequence belongs to the RNA polymerase beta' chain family. RpoC1 subfamily. In terms of assembly, in plastids the minimal PEP RNA polymerase catalytic core is composed of four subunits: alpha, beta, beta', and beta''. When a (nuclear-encoded) sigma factor is associated with the core the holoenzyme is formed, which can initiate transcription. Mg(2+) serves as cofactor. The cofactor is Zn(2+).

The protein resides in the plastid. It localises to the chloroplast. It carries out the reaction RNA(n) + a ribonucleoside 5'-triphosphate = RNA(n+1) + diphosphate. Functionally, DNA-dependent RNA polymerase catalyzes the transcription of DNA into RNA using the four ribonucleoside triphosphates as substrates. In Arabidopsis thaliana (Mouse-ear cress), this protein is DNA-directed RNA polymerase subunit beta'.